Consider the following 494-residue polypeptide: Solute carrier family 2, facilitated glucose transporter member 3 (494 aa).

The Cytoplasmic portion of the chain corresponds to 1–10 (MGTTKVTTPL). A helical membrane pass occupies residues 11–32 (IFAISIATIGSFQFGYNTGVIN). The Extracellular portion of the chain corresponds to 33-64 (APEAIIKDFLNYTLEERSETPPSSVLLTSLWS). Asn-43 is a glycosylation site (N-linked (GlcNAc...) asparagine). The helical transmembrane segment at 65–85 (LSVAIFSVGGMIGSFSVGLFV) threads the bilayer. Topologically, residues 86–90 (NRFGR) are cytoplasmic. Residues 91–111 (RNSMLIVNLLAIAGGCLMGFC) traverse the membrane as a helical segment. The Extracellular segment spans residues 112 to 118 (KIAESVE). The helical transmembrane segment at 119–142 (MLILGRLIIGLFCGLCTGFVPMYI) threads the bilayer. Residues 143–153 (GEISPTALRGA) lie on the Cytoplasmic side of the membrane. A helical membrane pass occupies residues 154 to 174 (FGTLNQLGIVIGILVAQIFGL). Gln-159 lines the D-glucose pocket. The Extracellular segment spans residues 175–183 (KVILGTEDL). The helical transmembrane segment at 184–204 (WPLLLGFTILPAIIQCAALPF) threads the bilayer. Topologically, residues 205-269 (CPESPRFLLI…LFRAPNYRQP (65 aa)) are cytoplasmic. A Phosphothreonine modification is found at Thr-232. Residues 270–290 (IIISIMLQLSQQLSGINAVFY) form a helical membrane-spanning segment. The interval 277–279 (QLS) is important for selectivity against fructose. Residues 280-281 (QQ) and Asn-286 each bind D-glucose. The Extracellular segment spans residues 291-304 (YSTGIFKDAGVQEP). The chain crosses the membrane as a helical span at residues 305–325 (VYATIGAGVVNTIFTVVSVFL). A D-glucose-binding site is contributed by Asn-315. The Cytoplasmic portion of the chain corresponds to 326-331 (VERAGR). The helical transmembrane segment at 332–352 (RTLHLIGLGGMAFCSILMTIS) threads the bilayer. Over 353–363 (LLLKDNYSWMS) the chain is Extracellular. The helical transmembrane segment at 364-389 (FICIGAILVFVAFFEIGPGPIPWFIV) threads the bilayer. 2 residues coordinate D-glucose: Glu-378 and Trp-386. Residues 390-399 (AELFGQGPRP) lie on the Cytoplasmic side of the membrane. A helical membrane pass occupies residues 400-420 (AAMAVAGCSNWTSNFLVGLLF). The Extracellular portion of the chain corresponds to 421-429 (PSATFYLGA). Residues 430–450 (YVFIVFTVFLVIFWVFTFFKV) form a helical membrane-spanning segment. At 451-494 (PETRGRTFEEITRAFEGQVQTGTRGEKGPIMEMNSIQPTKDTNA) the chain is on the cytoplasmic side. The tract at residues 473-494 (TRGEKGPIMEMNSIQPTKDTNA) is disordered. Polar residues predominate over residues 484–494 (NSIQPTKDTNA). A Phosphoserine modification is found at Ser-485. Residue Thr-492 is modified to Phosphothreonine.

Belongs to the major facilitator superfamily. Sugar transporter (TC 2.A.1.1) family. Glucose transporter subfamily. As to quaternary structure, interacts with SMIM43; the interaction may promote SLC2A3-mediated glucose transport to meet the energy needs of mesendoderm differentiation. Detected in placenta.

It is found in the cell membrane. The protein resides in the perikaryon. It localises to the cell projection. It carries out the reaction D-glucose(out) = D-glucose(in). The enzyme catalyses D-galactose(in) = D-galactose(out). With respect to regulation, deoxyglucose transport is inhibited by D-glucose, D-galactose and maltose. Galactose transport is inhibited by D-glucose and maltose. Facilitative glucose transporter. Can also mediate the uptake of various other monosaccharides across the cell membrane. Mediates the uptake of glucose, 2-deoxyglucose, galactose, mannose, xylose and fucose, and probably also dehydroascorbate. Does not mediate fructose transport. Required for mesendoderm differentiation. The protein is Solute carrier family 2, facilitated glucose transporter member 3 of Ovis aries (Sheep).